The primary structure comprises 224 residues: DNA mismatch repair protein MutH (224 aa).

The protein belongs to the MutH family.

The protein localises to the cytoplasm. Functionally, sequence-specific endonuclease that cleaves unmethylated GATC sequences. It is involved in DNA mismatch repair. This chain is DNA mismatch repair protein MutH, found in Histophilus somni (strain 129Pt) (Haemophilus somnus).